The sequence spans 223 residues: Small ribosomal subunit protein uS3 (223 aa).

In terms of domain architecture, KH type-2 spans 39-107 (VREFLHKKLA…PVQINIEEVR (69 aa)).

This sequence belongs to the universal ribosomal protein uS3 family. As to quaternary structure, part of the 30S ribosomal subunit. Forms a tight complex with proteins S10 and S14.

Its function is as follows. Binds the lower part of the 30S subunit head. Binds mRNA in the 70S ribosome, positioning it for translation. In Francisella tularensis subsp. holarctica (strain FTNF002-00 / FTA), this protein is Small ribosomal subunit protein uS3.